The primary structure comprises 286 residues: Bifunctional protein FolD 2 (286 aa).

NADP(+) is bound by residues 165–167, threonine 192, and isoleucine 233; that span reads GRG.

Belongs to the tetrahydrofolate dehydrogenase/cyclohydrolase family. Homodimer.

It catalyses the reaction (6R)-5,10-methylene-5,6,7,8-tetrahydrofolate + NADP(+) = (6R)-5,10-methenyltetrahydrofolate + NADPH. The catalysed reaction is (6R)-5,10-methenyltetrahydrofolate + H2O = (6R)-10-formyltetrahydrofolate + H(+). The protein operates within one-carbon metabolism; tetrahydrofolate interconversion. Catalyzes the oxidation of 5,10-methylenetetrahydrofolate to 5,10-methenyltetrahydrofolate and then the hydrolysis of 5,10-methenyltetrahydrofolate to 10-formyltetrahydrofolate. The sequence is that of Bifunctional protein FolD 2 from Salinispora arenicola (strain CNS-205).